The sequence spans 361 residues: MQQETQAPPLLLLYARSISKTNYIFRVSAMDENYENFTDAYEEMWGFDANETNTFASSEVRVISLVVYCLTFLLGVPGNSFVIFIAGMKMKRTVNTIWFLNLATADLLCCLSVPLTVAEILLDHHWPYGYAMCKILPSVIVISMFASVFTLNIISLDRFTQVITPVWAQNHRSLLLARLSCVAVWILALLLSLPFMILRRTYEEFNMTVCTFDDDDFTTYGALSIVRFVFGFLIPLMSIVTCYGIIARKLGSRHFRSGRAFRIMLAVIVAFFLCWMPYHVLDLIRSYGGESSSMVALKVDPLAISLAYVNSCLNPVLYVFMGQDFKNKVQLSLRRVFERAFSEEGTQISRSTQSQQVHSVL.

The Extracellular segment spans residues 1–64; it reads MQQETQAPPL…FASSEVRVIS (64 aa). Asn36 and Asn50 each carry an N-linked (GlcNAc...) asparagine glycan. A helical transmembrane segment spans residues 65 to 85; it reads LVVYCLTFLLGVPGNSFVIFI. Residues 86–96 lie on the Cytoplasmic side of the membrane; the sequence is AGMKMKRTVNT. Residues 97-117 form a helical membrane-spanning segment; sequence IWFLNLATADLLCCLSVPLTV. Over 118–134 the chain is Extracellular; sequence AEILLDHHWPYGYAMCK. A disulfide bridge links Cys133 with Cys210. A helical transmembrane segment spans residues 135–155; it reads ILPSVIVISMFASVFTLNIIS. At 156 to 177 the chain is on the cytoplasmic side; it reads LDRFTQVITPVWAQNHRSLLLA. The helical transmembrane segment at 178–198 threads the bilayer; the sequence is RLSCVAVWILALLLSLPFMIL. The Extracellular segment spans residues 199–224; that stretch reads RRTYEEFNMTVCTFDDDDFTTYGALS. Residues 225-245 form a helical membrane-spanning segment; it reads IVRFVFGFLIPLMSIVTCYGI. Topologically, residues 246-262 are cytoplasmic; that stretch reads IARKLGSRHFRSGRAFR. A helical transmembrane segment spans residues 263-283; the sequence is IMLAVIVAFFLCWMPYHVLDL. Residues 284-301 lie on the Extracellular side of the membrane; the sequence is IRSYGGESSSMVALKVDP. A helical membrane pass occupies residues 302–322; sequence LAISLAYVNSCLNPVLYVFMG. Residues 323–361 lie on the Cytoplasmic side of the membrane; it reads QDFKNKVQLSLRRVFERAFSEEGTQISRSTQSQQVHSVL.

Belongs to the G-protein coupled receptor 1 family.

It is found in the cell membrane. In terms of biological role, receptor for the chemotactic and inflammatory peptide anaphylatoxin C3a. This receptor stimulates chemotaxis, granule enzyme release and superoxide anion production. This Danio rerio (Zebrafish) protein is C3a anaphylatoxin chemotactic receptor (c3ar1).